The sequence spans 113 residues: Kita-kyushu lung cancer antigen 1 (113 aa).

Over 1–3 the chain is Cytoplasmic; the sequence is MNF. A helical; Signal-anchor for type II membrane protein transmembrane segment spans residues 4–21; that stretch reads YLLLASSILCALIVFWKY. The Extracellular segment spans residues 22–113; sequence RRFQRNTGEM…RGASPHRKST (92 aa). The N-linked (GlcNAc...) asparagine glycan is linked to N83.

As to expression, specifically expressed in testis. Expressed by cancer cell lines.

It is found in the cell membrane. The protein is Kita-kyushu lung cancer antigen 1 (CT83) of Homo sapiens (Human).